Consider the following 237-residue polypeptide: Uridylate kinase (237 aa).

ATP is bound at residue 9 to 12 (KLSG). The interval 17–22 (GTQGYG) is involved in allosteric activation by GTP. G51 is a binding site for UMP. ATP is bound by residues G52 and R56. Residues D71 and 132-139 (CGNPFFTT) contribute to the UMP site. The ATP site is built by T159, Y165, and D168.

This sequence belongs to the UMP kinase family. Homohexamer.

It localises to the cytoplasm. The enzyme catalyses UMP + ATP = UDP + ADP. The protein operates within pyrimidine metabolism; CTP biosynthesis via de novo pathway; UDP from UMP (UMPK route): step 1/1. Allosterically activated by GTP. Inhibited by UTP. In terms of biological role, catalyzes the reversible phosphorylation of UMP to UDP. This chain is Uridylate kinase, found in Parasynechococcus marenigrum (strain WH8102).